The primary structure comprises 1938 residues: Myosin-1 (1938 aa).

A disordered region spans residues 1 to 27; it reads MSLEHEKDPGWQYLKRSREQQLADQSR. Residues 16 to 27 are compositionally biased toward basic and acidic residues; it reads RSREQQLADQSR. In terms of domain architecture, Myosin N-terminal SH3-like spans 30 to 80; that stretch reads DSKKNVWIPDAEEGYIEGVIKGPGPKADTVIVTAGGKDVTLKKDIVQEVNP. In terms of domain architecture, Myosin motor spans 84 to 785; that stretch reads EKTEDMSNLT…VVAHIEDLRD (702 aa). Lysine 128 bears the N6,N6,N6-trimethyllysine mark. Position 177 to 184 (177 to 184) interacts with ATP; that stretch reads GESGAGKT. Actin-binding stretches follow at residues 660–682 and 764–778; these read LNKL…IPNE and RIGH…GVVA. An alpha-helical tailpiece (short S2) region spans residues 846-1170; sequence QLKCGKMAEE…NKQLEIQQDN (325 aa). The segment at 846 to 1938 is rodlike tail (S2 and LMM domains); that stretch reads QLKCGKMAEE…GQVVRSATNK (1093 aa). The stretch at 846-1938 forms a coiled coil; sequence QLKCGKMAEE…GQVVRSATNK (1093 aa). Residues 919 to 951 are disordered; it reads RQEVEKSLNDANDRLSEHEEKNADLEKQRRKAQ. A compositionally biased stretch (basic and acidic residues) spans 920–951; sequence QEVEKSLNDANDRLSEHEEKNADLEKQRRKAQ. The tract at residues 1171–1938 is light meromyosin (LMM); it reads NKKKDSEIIK…GQVVRSATNK (768 aa).

This sequence belongs to the TRAFAC class myosin-kinesin ATPase superfamily. Myosin family. As to quaternary structure, muscle myosin is a hexameric protein that consists of 2 heavy chain subunits (MHC), 2 alkali light chain subunits (MLC) and 2 regulatory light chain subunits (MLC-2). Interacts with itr-1 (via c-terminal coiled coil domain). As to expression, found exclusively in the pharyngeal muscle.

Its subcellular location is the cytoplasm. It is found in the myofibril. In terms of biological role, muscle contraction. This Caenorhabditis elegans protein is Myosin-1.